Here is a 212-residue protein sequence, read N- to C-terminus: Thymidylate kinase (212 aa).

Residue 11-18 (GPEGAGKT) participates in ATP binding.

This sequence belongs to the thymidylate kinase family.

The catalysed reaction is dTMP + ATP = dTDP + ADP. Functionally, phosphorylation of dTMP to form dTDP in both de novo and salvage pathways of dTTP synthesis. The protein is Thymidylate kinase of Streptococcus pneumoniae (strain Hungary19A-6).